Here is a 67-residue protein sequence, read N- to C-terminus: Large ribosomal subunit protein bL35 (67 aa).

Belongs to the bacterial ribosomal protein bL35 family.

This is Large ribosomal subunit protein bL35 from Leptothrix cholodnii (strain ATCC 51168 / LMG 8142 / SP-6) (Leptothrix discophora (strain SP-6)).